Here is a 445-residue protein sequence, read N- to C-terminus: MTDSNQPMPLQARKSGALHGTARVPGDKSISHRALILGALAVGETRISGLLEGEDVINTAKAMRALGAKVERTGDCEWRVHGVGVAGFATPEAPLDFGNSGTGCRLAMGAVAGSPIVATFDGDASLRSRPMRRIVDPLELMGAKVVSSSEGGRLPLALQGARDPLPILYRTPVPSAQIKSAVLLAGLSAPGITTVIEAEASRDHTELMLQHFGATIVTEAEGAHGRKISLTGQPELRGAPVVVPADPSSAAFPMVAALVVPGSDIELTDVMTNPLRTGLITTLREMGASIEDSDVRGDAGEPMARFRVRGSKLKGVEVPPERAPSMIDEYLVLAVAAAFAEGTTVMRGLHELRVKESDRLEATAAMLRVNGVAVEIAGDDLIVEGKGHVPGGGVVATHMDHRIAMSALAMGLASDKPVTVDDTAFIATSFPDFVPMMQRLGAEFG.

A disordered region spans residues 1–25 (MTDSNQPMPLQARKSGALHGTARVP). Residues Lys-28, Ser-29, and Arg-33 each contribute to the 3-phosphoshikimate site. Position 28 (Lys-28) interacts with phosphoenolpyruvate. Residues Gly-101 and Arg-129 each contribute to the phosphoenolpyruvate site. 3-phosphoshikimate is bound by residues Ser-175, Gln-177, Asp-328, and Lys-355. Position 177 (Gln-177) interacts with phosphoenolpyruvate. The Proton acceptor role is filled by Asp-328. Residues Arg-359 and Arg-402 each coordinate phosphoenolpyruvate.

It belongs to the EPSP synthase family. Monomer.

The protein localises to the cytoplasm. The enzyme catalyses 3-phosphoshikimate + phosphoenolpyruvate = 5-O-(1-carboxyvinyl)-3-phosphoshikimate + phosphate. It functions in the pathway metabolic intermediate biosynthesis; chorismate biosynthesis; chorismate from D-erythrose 4-phosphate and phosphoenolpyruvate: step 6/7. In terms of biological role, catalyzes the transfer of the enolpyruvyl moiety of phosphoenolpyruvate (PEP) to the 5-hydroxyl of shikimate-3-phosphate (S3P) to produce enolpyruvyl shikimate-3-phosphate and inorganic phosphate. This chain is 3-phosphoshikimate 1-carboxyvinyltransferase, found in Rhodopseudomonas palustris (strain ATCC BAA-98 / CGA009).